The sequence spans 325 residues: Fructose-1,6-bisphosphatase class 1 (325 aa).

Mg(2+)-binding residues include E84, D103, L105, and D106. Substrate contacts are provided by residues 106 to 109 (DGSS), N196, and K262. E268 serves as a coordination point for Mg(2+).

The protein belongs to the FBPase class 1 family. Homotetramer. Requires Mg(2+) as cofactor.

It localises to the cytoplasm. The enzyme catalyses beta-D-fructose 1,6-bisphosphate + H2O = beta-D-fructose 6-phosphate + phosphate. It functions in the pathway carbohydrate biosynthesis; gluconeogenesis. This Shewanella oneidensis (strain ATCC 700550 / JCM 31522 / CIP 106686 / LMG 19005 / NCIMB 14063 / MR-1) protein is Fructose-1,6-bisphosphatase class 1.